The chain runs to 349 residues: Tetraacyldisaccharide 4'-kinase (349 aa).

58-65 is a binding site for ATP; the sequence is TAGGSGKT.

This sequence belongs to the LpxK family.

It carries out the reaction a lipid A disaccharide + ATP = a lipid IVA + ADP + H(+). Its pathway is glycolipid biosynthesis; lipid IV(A) biosynthesis; lipid IV(A) from (3R)-3-hydroxytetradecanoyl-[acyl-carrier-protein] and UDP-N-acetyl-alpha-D-glucosamine: step 6/6. Its function is as follows. Transfers the gamma-phosphate of ATP to the 4'-position of a tetraacyldisaccharide 1-phosphate intermediate (termed DS-1-P) to form tetraacyldisaccharide 1,4'-bis-phosphate (lipid IVA). The chain is Tetraacyldisaccharide 4'-kinase from Shewanella amazonensis (strain ATCC BAA-1098 / SB2B).